The following is a 379-amino-acid chain: S-adenosylmethionine:tRNA ribosyltransferase-isomerase (379 aa).

The interval 35–58 (AESRPHAESVPHAESRPHAESAFS) is disordered.

Belongs to the QueA family. Monomer.

The protein localises to the cytoplasm. It catalyses the reaction 7-aminomethyl-7-carbaguanosine(34) in tRNA + S-adenosyl-L-methionine = epoxyqueuosine(34) in tRNA + adenine + L-methionine + 2 H(+). It functions in the pathway tRNA modification; tRNA-queuosine biosynthesis. Its function is as follows. Transfers and isomerizes the ribose moiety from AdoMet to the 7-aminomethyl group of 7-deazaguanine (preQ1-tRNA) to give epoxyqueuosine (oQ-tRNA). The chain is S-adenosylmethionine:tRNA ribosyltransferase-isomerase from Rhizobium leguminosarum bv. trifolii (strain WSM2304).